A 297-amino-acid chain; its full sequence is 4-hydroxy-tetrahydrodipicolinate synthase (297 aa).

Position 47 (threonine 47) interacts with pyruvate. The active-site Proton donor/acceptor is tyrosine 136. Lysine 165 functions as the Schiff-base intermediate with substrate in the catalytic mechanism. Threonine 206 lines the pyruvate pocket.

It belongs to the DapA family. In terms of assembly, homotetramer; dimer of dimers.

The protein resides in the cytoplasm. The enzyme catalyses L-aspartate 4-semialdehyde + pyruvate = (2S,4S)-4-hydroxy-2,3,4,5-tetrahydrodipicolinate + H2O + H(+). It functions in the pathway amino-acid biosynthesis; L-lysine biosynthesis via DAP pathway; (S)-tetrahydrodipicolinate from L-aspartate: step 3/4. Functionally, catalyzes the condensation of (S)-aspartate-beta-semialdehyde [(S)-ASA] and pyruvate to 4-hydroxy-tetrahydrodipicolinate (HTPA). In Sulfurovum sp. (strain NBC37-1), this protein is 4-hydroxy-tetrahydrodipicolinate synthase.